Reading from the N-terminus, the 511-residue chain is DnaJ homolog 1, mitochondrial (511 aa).

A mitochondrion-targeting transit peptide spans 1–55 (MAFQQGVLSRCSGVFRHHVGHSRHINNILYRHAIAFASIAPRIPKSSFHTSAIRN). Residues 59-127 (FKDPYDTLGL…RQQYDQFGPA (69 aa)) form the J domain. The CR-type zinc-finger motif lies at 217 to 297 (SKNVQLRFSA…CHGEGVQVNR (81 aa)). CXXCXGXG motif repeat units lie at residues 230 to 237 (CSTCSGTG), 247 to 254 (CSTCHGTG), 269 to 276 (CPTCNGEG), and 285 to 292 (CTKCHGEG).

It is found in the mitochondrion. In terms of biological role, plays a role in mitochondrial biogenesis and protein folding. This Saccharomyces cerevisiae (strain ATCC 204508 / S288c) (Baker's yeast) protein is DnaJ homolog 1, mitochondrial (MDJ1).